We begin with the raw amino-acid sequence, 244 residues long: Krueppel-like factor 9 (244 aa).

Disordered regions lie at residues 24–51 (VPEH…GDPG) and 79–143 (PSVC…EKRH). The span at 32-51 (DAERLRLPEREVTKEHGDPG) shows a compositional bias: basic and acidic residues. S122 bears the Phosphoserine mark. The segment covering 134–143 (KGKHASEKRH) has biased composition (basic residues). 3 consecutive C2H2-type zinc fingers follow at residues 143–167 (HKCP…YRVH), 173–197 (FPCT…YRTH), and 203–225 (FRCP…ARRH).

This sequence belongs to the Sp1 C2H2-type zinc-finger protein family. In terms of assembly, interacts with ZZEF1.

Its subcellular location is the nucleus. Transcription factor that binds to GC box promoter elements. Selectively activates mRNA synthesis from genes containing tandem repeats of GC boxes but represses genes with a single GC box. Acts as an epidermal circadian transcription factor regulating keratinocyte proliferation. The protein is Krueppel-like factor 9 (Klf9) of Rattus norvegicus (Rat).